The primary structure comprises 190 residues: Endo-1,4-beta-xylanase (190 aa).

A GH11 domain is found at 1–190 (QTIGPGTGYS…SSGSASITVS (190 aa)). The Nucleophile role is filled by E86. The Proton donor role is filled by E177.

Belongs to the glycosyl hydrolase 11 (cellulase G) family.

The catalysed reaction is Endohydrolysis of (1-&gt;4)-beta-D-xylosidic linkages in xylans.. Its pathway is glycan degradation; xylan degradation. This Trichoderma harzianum (Hypocrea lixii) protein is Endo-1,4-beta-xylanase.